The sequence spans 242 residues: Hairy and enhancer of split-related protein HELT (242 aa).

In terms of domain architecture, bHLH spans 10–65 (RTPVSHKVIEKRRRDRINRCLNELGKTVPMALAKQSSGKLEKAEILEMTVQYLRAL). Lys48 bears the N6-acetyllysine mark. Residues 87 to 122 (FHYGYHECMKNLVHYLTTVERMETKDTKYARILAFL) form the Orange domain.

The protein belongs to the HEY family. As to quaternary structure, self-associates. Interacts with HES5 and HEY2.

The protein localises to the nucleus. In terms of biological role, transcriptional repressor which binds preferentially to the canonical E box sequence 5'-CACGCG-3'. This chain is Hairy and enhancer of split-related protein HELT (HELT), found in Homo sapiens (Human).